Consider the following 306-residue polypeptide: Ornithine carbamoyltransferase (306 aa).

Carbamoyl phosphate-binding positions include 53 to 56, Gln80, Arg104, and 131 to 134; these read STRT and HPCQ. Residues Asn162, Asp219, and 223–224 each bind L-ornithine; that span reads SM. Carbamoyl phosphate contacts are provided by residues 259 to 260 and Arg287; that span reads CL.

This sequence belongs to the aspartate/ornithine carbamoyltransferase superfamily. OTCase family.

It localises to the cytoplasm. It catalyses the reaction carbamoyl phosphate + L-ornithine = L-citrulline + phosphate + H(+). Its pathway is amino-acid biosynthesis; L-arginine biosynthesis; L-arginine from L-ornithine and carbamoyl phosphate: step 1/3. Its function is as follows. Reversibly catalyzes the transfer of the carbamoyl group from carbamoyl phosphate (CP) to the N(epsilon) atom of ornithine (ORN) to produce L-citrulline. This Acinetobacter baumannii (strain ATCC 17978 / DSM 105126 / CIP 53.77 / LMG 1025 / NCDC KC755 / 5377) protein is Ornithine carbamoyltransferase.